A 100-amino-acid chain; its full sequence is Urease subunit gamma (100 aa).

This sequence belongs to the urease gamma subunit family. As to quaternary structure, heterotrimer of UreA (gamma), UreB (beta) and UreC (alpha) subunits. Three heterotrimers associate to form the active enzyme.

Its subcellular location is the cytoplasm. The catalysed reaction is urea + 2 H2O + H(+) = hydrogencarbonate + 2 NH4(+). It participates in nitrogen metabolism; urea degradation; CO(2) and NH(3) from urea (urease route): step 1/1. This chain is Urease subunit gamma, found in Burkholderia multivorans (strain ATCC 17616 / 249).